The chain runs to 720 residues: Polyribonucleotide nucleotidyltransferase (720 aa).

Asp487 and Asp493 together coordinate Mg(2+). The KH domain maps to 554-613; that stretch reads PRITTISIPKEKIREVIGTGGKVIREICEQTGAKIDIDDDGTIKVASVDADAAQRAIDWI. An S1 motif domain is found at 623–691; that stretch reads GVIYNGKVVK…DRGKVKLSMK (69 aa). The interval 695–720 is disordered; it reads QTTGEDISAQLEAERAASKRERHHED. Residues 706–720 are compositionally biased toward basic and acidic residues; the sequence is EAERAASKRERHHED.

Belongs to the polyribonucleotide nucleotidyltransferase family. Requires Mg(2+) as cofactor.

It localises to the cytoplasm. The enzyme catalyses RNA(n+1) + phosphate = RNA(n) + a ribonucleoside 5'-diphosphate. In terms of biological role, involved in mRNA degradation. Catalyzes the phosphorolysis of single-stranded polyribonucleotides processively in the 3'- to 5'-direction. This Paramagnetospirillum magneticum (strain ATCC 700264 / AMB-1) (Magnetospirillum magneticum) protein is Polyribonucleotide nucleotidyltransferase.